The primary structure comprises 98 residues: NADH-ubiquinone oxidoreductase chain 4L (98 aa).

3 helical membrane-spanning segments follow: residues 1–21, 27–47, and 61–81; these read MIPTYMNIMLAFTISLLGMLT, VASLLCLEGMTMSLFIMTALI, and IILLVFAACEAAVGLALLISI.

Belongs to the complex I subunit 4L family. As to quaternary structure, core subunit of respiratory chain NADH dehydrogenase (Complex I) which is composed of 45 different subunits.

The protein localises to the mitochondrion inner membrane. It catalyses the reaction a ubiquinone + NADH + 5 H(+)(in) = a ubiquinol + NAD(+) + 4 H(+)(out). Functionally, core subunit of the mitochondrial membrane respiratory chain NADH dehydrogenase (Complex I) which catalyzes electron transfer from NADH through the respiratory chain, using ubiquinone as an electron acceptor. Part of the enzyme membrane arm which is embedded in the lipid bilayer and involved in proton translocation. The protein is NADH-ubiquinone oxidoreductase chain 4L (MT-ND4L) of Macaca sylvanus (Barbary macaque).